A 418-amino-acid chain; its full sequence is Gamma-glutamyl phosphate reductase (418 aa).

Belongs to the gamma-glutamyl phosphate reductase family.

It localises to the cytoplasm. It carries out the reaction L-glutamate 5-semialdehyde + phosphate + NADP(+) = L-glutamyl 5-phosphate + NADPH + H(+). It functions in the pathway amino-acid biosynthesis; L-proline biosynthesis; L-glutamate 5-semialdehyde from L-glutamate: step 2/2. Catalyzes the NADPH-dependent reduction of L-glutamate 5-phosphate into L-glutamate 5-semialdehyde and phosphate. The product spontaneously undergoes cyclization to form 1-pyrroline-5-carboxylate. The protein is Gamma-glutamyl phosphate reductase of Clostridium kluyveri (strain NBRC 12016).